A 682-amino-acid polypeptide reads, in one-letter code: Potassium-transporting ATPase ATP-binding subunit (682 aa).

Transmembrane regions (helical) follow at residues 34 to 54 (PVMF…IAMA), 62 to 82 (ALFS…ANFA), 219 to 239 (IALT…TATL), and 254 to 274 (VLVA…LSAI). Asp307 serves as the catalytic 4-aspartylphosphate intermediate. ATP is bound by residues Asp344, Glu348, 377–384 (FTAQSRMS), and Lys395. Mg(2+) contacts are provided by Asp518 and Asp522. 3 consecutive transmembrane segments (helical) span residues 588-608 (FAII…LNIM), 616-636 (AILS…PLAL), and 656-676 (IYGL…DLLL).

This sequence belongs to the cation transport ATPase (P-type) (TC 3.A.3) family. Type IA subfamily. In terms of assembly, the system is composed of three essential subunits: KdpA, KdpB and KdpC.

It localises to the cell inner membrane. The enzyme catalyses K(+)(out) + ATP + H2O = K(+)(in) + ADP + phosphate + H(+). Functionally, part of the high-affinity ATP-driven potassium transport (or Kdp) system, which catalyzes the hydrolysis of ATP coupled with the electrogenic transport of potassium into the cytoplasm. This subunit is responsible for energy coupling to the transport system and for the release of the potassium ions to the cytoplasm. The chain is Potassium-transporting ATPase ATP-binding subunit from Escherichia coli O8 (strain IAI1).